The primary structure comprises 275 residues: Transmembrane protein 202 (275 aa).

Helical transmembrane passes span 60–80 (SGFS…QFLV), 116–136 (ALFL…LSSC), 151–171 (VSML…LFLA), and 193–213 (WCSE…FITF).

The protein resides in the membrane. The sequence is that of Transmembrane protein 202 (Tmem202) from Mus musculus (Mouse).